The sequence spans 77 residues: DNA-directed RNA polymerase subunit omega (77 aa).

It belongs to the RNA polymerase subunit omega family. In terms of assembly, the RNAP catalytic core consists of 2 alpha, 1 beta, 1 beta' and 1 omega subunit. When a sigma factor is associated with the core the holoenzyme is formed, which can initiate transcription.

The catalysed reaction is RNA(n) + a ribonucleoside 5'-triphosphate = RNA(n+1) + diphosphate. Its function is as follows. Promotes RNA polymerase assembly. Latches the N- and C-terminal regions of the beta' subunit thereby facilitating its interaction with the beta and alpha subunits. The protein is DNA-directed RNA polymerase subunit omega of Dichelobacter nodosus (strain VCS1703A).